Consider the following 327-residue polypeptide: Ornithine carbamoyltransferase 2, anabolic (327 aa).

Carbamoyl phosphate is bound by residues R109 and 136–139; that span reads HPTQ. L-ornithine-binding positions include N168, D232, and 236-237; that span reads SM. Carbamoyl phosphate is bound by residues 273–274 and R313; that span reads CL.

This sequence belongs to the aspartate/ornithine carbamoyltransferase superfamily. OTCase family. As to quaternary structure, homotrimer.

The protein localises to the cytoplasm. The enzyme catalyses carbamoyl phosphate + L-ornithine = L-citrulline + phosphate + H(+). The protein operates within amino-acid biosynthesis; L-arginine biosynthesis; L-arginine from L-ornithine and carbamoyl phosphate: step 1/3. In terms of biological role, plays an important role in the survival and pathogenicity of P.syringae. Phaseolotoxin is a virulence factor that inhibits the catalysis of the host OTCase. Phaseolotoxin-producing bacteria do not suffer autointoxication because they possess the anabolic OTCase ArgK which can function even in the presence of phaseolotoxin. Reversibly catalyzes the transfer of the carbamoyl group from carbamoyl phosphate (CP) to the N(epsilon) atom of ornithine (ORN) to produce L-citrulline, which is a substrate for argininosuccinate synthetase, the enzyme involved in the final step in arginine biosynthesis. The polypeptide is Ornithine carbamoyltransferase 2, anabolic (Pseudomonas savastanoi pv. phaseolicola (Pseudomonas syringae pv. phaseolicola)).